The following is a 403-amino-acid chain: Poly(rC)-binding protein 4 (403 aa).

3 consecutive KH domains span residues 17–67, 101–154, and 241–293; these read TLTL…TITG, PVTL…TVSG, and TSSQ…TITG.

It localises to the cytoplasm. In terms of biological role, single-stranded nucleic acid binding protein that binds preferentially to oligo dC. The polypeptide is Poly(rC)-binding protein 4 (PCBP4) (Bos taurus (Bovine)).